The sequence spans 466 residues: Glutamate--tRNA ligase 2 (466 aa).

Positions 9-19 match the 'HIGH' region motif; that stretch reads PSPTGYLHVGG. A 'KMSKS' region motif is present at residues 234-238; sequence PLSKR. K237 serves as a coordination point for ATP.

This sequence belongs to the class-I aminoacyl-tRNA synthetase family. Glutamate--tRNA ligase type 1 subfamily. In terms of assembly, monomer.

It localises to the cytoplasm. It catalyses the reaction tRNA(Glu) + L-glutamate + ATP = L-glutamyl-tRNA(Glu) + AMP + diphosphate. In terms of biological role, catalyzes the attachment of glutamate to tRNA(Glu) in a two-step reaction: glutamate is first activated by ATP to form Glu-AMP and then transferred to the acceptor end of tRNA(Glu). The sequence is that of Glutamate--tRNA ligase 2 from Pseudothermotoga lettingae (strain ATCC BAA-301 / DSM 14385 / NBRC 107922 / TMO) (Thermotoga lettingae).